The following is a 244-amino-acid chain: MRILVTNDDGIYSPGLWALAEAASQFGEVFVAAPDTEQSATGHAITIAHPVRAYPHPAPLHGPHFPAYQVRGTPADCVALGLHLFGPVDLVLSGVNLGSNLGHEIWHSGTVAAAKQGYLFGLSAAAFSVPLNGEVPDFAGLRPWLLRTLETLLRLERPFLVNVNLPLRPKGFLWTRQSVRAYEGVVIPGEDPMGRPFYWFASRPLKEAEEGTDRWAVAQGFVSATPLRLDLTDETRLQPALAQE.

Residues aspartate 8, aspartate 9, serine 39, and asparagine 96 each coordinate a divalent metal cation.

This sequence belongs to the SurE nucleotidase family. It depends on a divalent metal cation as a cofactor.

Its subcellular location is the cytoplasm. The catalysed reaction is a ribonucleoside 5'-phosphate + H2O = a ribonucleoside + phosphate. Its function is as follows. Nucleotidase that shows phosphatase activity on nucleoside 5'-monophosphates. This chain is 5'-nucleotidase SurE 2, found in Thermus thermophilus (strain ATCC BAA-163 / DSM 7039 / HB27).